Reading from the N-terminus, the 649-residue chain is Acetyl-coenzyme A synthetase (649 aa).

CoA is bound by residues 198–201, Thr-317, and Asn-341; that span reads RRGK. Residues 393–395, 417–422, Asp-506, and Arg-521 each bind ATP; these read GEP and DTWWQT. Ser-529 is a CoA binding site. Arg-532 lines the ATP pocket. Residues Val-543, His-545, and Val-548 each coordinate Mg(2+). Position 612 is an N6-acetyllysine (Lys-612). The interval 625–649 is disordered; the sequence is QPVQGDTSTLEDPTVLERLQASPAL.

It belongs to the ATP-dependent AMP-binding enzyme family. Mg(2+) is required as a cofactor. In terms of processing, acetylated. Deacetylation by the SIR2-homolog deacetylase activates the enzyme.

It catalyses the reaction acetate + ATP + CoA = acetyl-CoA + AMP + diphosphate. Functionally, catalyzes the conversion of acetate into acetyl-CoA (AcCoA), an essential intermediate at the junction of anabolic and catabolic pathways. AcsA undergoes a two-step reaction. In the first half reaction, AcsA combines acetate with ATP to form acetyl-adenylate (AcAMP) intermediate. In the second half reaction, it can then transfer the acetyl group from AcAMP to the sulfhydryl group of CoA, forming the product AcCoA. This is Acetyl-coenzyme A synthetase from Deinococcus radiodurans (strain ATCC 13939 / DSM 20539 / JCM 16871 / CCUG 27074 / LMG 4051 / NBRC 15346 / NCIMB 9279 / VKM B-1422 / R1).